The chain runs to 613 residues: ATP-dependent RNA helicase DeaD (613 aa).

Residues 5–33 (ITFNDLGLPEFILKAVSDLGFETPSPIQQ) carry the Q motif motif. The Helicase ATP-binding domain occupies 36–207 (IPHLLNGNDV…KRFMNDPQEV (172 aa)). ATP is bound at residue 49–56 (AQTGSGKT). Residues 155-158 (DEAD) carry the DEAD box motif. Positions 231 to 378 (KNEALLRFLE…EVELPNHLVL (148 aa)) constitute a Helicase C-terminal domain. Disordered stretches follow at residues 434-476 (ILPP…PQPM) and 552-613 (AVKS…RSSF). Composition is skewed to basic and acidic residues over residues 440 to 469 (PMEK…ERKG) and 556 to 613 (DNSR…RSSF).

It belongs to the DEAD box helicase family. DeaD/CsdA subfamily.

Its subcellular location is the cytoplasm. The catalysed reaction is ATP + H2O = ADP + phosphate + H(+). DEAD-box RNA helicase involved in various cellular processes at low temperature, including ribosome biogenesis, mRNA degradation and translation initiation. The chain is ATP-dependent RNA helicase DeaD from Haemophilus influenzae (strain ATCC 51907 / DSM 11121 / KW20 / Rd).